A 142-amino-acid chain; its full sequence is Large ribosomal subunit protein uL13 (142 aa).

The protein belongs to the universal ribosomal protein uL13 family. As to quaternary structure, part of the 50S ribosomal subunit.

Its function is as follows. This protein is one of the early assembly proteins of the 50S ribosomal subunit, although it is not seen to bind rRNA by itself. It is important during the early stages of 50S assembly. The sequence is that of Large ribosomal subunit protein uL13 from Polynucleobacter asymbioticus (strain DSM 18221 / CIP 109841 / QLW-P1DMWA-1) (Polynucleobacter necessarius subsp. asymbioticus).